The chain runs to 305 residues: Glycine--tRNA ligase alpha subunit (305 aa).

The protein belongs to the class-II aminoacyl-tRNA synthetase family. Tetramer of two alpha and two beta subunits.

The protein resides in the cytoplasm. The catalysed reaction is tRNA(Gly) + glycine + ATP = glycyl-tRNA(Gly) + AMP + diphosphate. This is Glycine--tRNA ligase alpha subunit from Streptococcus suis (strain 05ZYH33).